The sequence spans 321 residues: Transaldolase (321 aa).

Lys132 serves as the catalytic Schiff-base intermediate with substrate.

This sequence belongs to the transaldolase family. Type 1 subfamily. Homodimer.

The protein resides in the cytoplasm. The enzyme catalyses D-sedoheptulose 7-phosphate + D-glyceraldehyde 3-phosphate = D-erythrose 4-phosphate + beta-D-fructose 6-phosphate. The protein operates within carbohydrate degradation; pentose phosphate pathway; D-glyceraldehyde 3-phosphate and beta-D-fructose 6-phosphate from D-ribose 5-phosphate and D-xylulose 5-phosphate (non-oxidative stage): step 2/3. Its function is as follows. Transaldolase is important for the balance of metabolites in the pentose-phosphate pathway. The chain is Transaldolase from Rhizobium etli (strain CIAT 652).